The sequence spans 1509 residues: ABC transporter G family member 5 (1509 aa).

Residues 1-10 (MVKQDPRDKS) are compositionally biased toward basic and acidic residues. Residues 1 to 70 (MVKQDPRDKS…NNNNNNIKHK (70 aa)) are disordered. Residues 11–28 (SYSPNLSIPINNQEEPTL) are compositionally biased toward polar residues. Positions 29–66 (NNNNNNNNNNNNNNNNNNNNNNNNNNNNNNNKNNNNNN) are enriched in low complexity. The 248-residue stretch at 129 to 376 (VYCRNATYTV…FKKLGFACPS (248 aa)) folds into the ABC transporter 1 domain. Residue 168-175 (GTPGCGKS) participates in ATP binding. Positions 472–748 (SRNYYNFATR…SVCFFALKYL (277 aa)) constitute an ABC transmembrane type-2 1 domain. The next 7 helical transmembrane spans lie at 477–497 (NFAT…TLYW), 512–532 (LLFF…NSFF), 557–577 (IICD…IVYW), 583–603 (PVFI…NLSL), 616–636 (IEIA…FSGF), 643–663 (IGGW…FQGL), and 725–745 (IVYA…FFAL). Low complexity predominate over residues 813–831 (PLTSPNYNNNNNLSGSGNN). Residues 813-881 (PLTSPNYNNN…PISTSQKDIS (69 aa)) form a disordered region. The span at 839–881 (TPSTLSPMVNSPLTNLSPMVNTPSKNGNHSKQKPISTSQKDIS) shows a compositional bias: polar residues. In terms of domain architecture, ABC transporter 2 spans 888–1141 (LQFKKLCYAV…VILDYCDKLG (254 aa)). 935–942 (GPSGAGKS) contributes to the ATP binding site. One can recognise an ABC transmembrane type-2 2 domain in the interval 1231 to 1504 (LRRPAIFVSN…GLSFWGFKKV (274 aa)). 6 helical membrane passes run 1236–1256 (IFVS…TLFV), 1271–1291 (LLFF…PTTV), 1320–1340 (YPFI…IAGL), 1352–1372 (CLFI…CLAV), 1379–1399 (MAST…GFVI), and 1481–1501 (IDIA…FWGF).

The protein belongs to the ABC transporter superfamily. ABCG family. PDR (TC 3.A.1.205) subfamily.

The protein localises to the membrane. The protein is ABC transporter G family member 5 (abcG5) of Dictyostelium discoideum (Social amoeba).